The chain runs to 348 residues: ATPase GET3 (348 aa).

Position 26–33 (26–33 (KGGVGKTT)) interacts with ATP. Residue D57 is part of the active site. Positions 241 and 268 each coordinate ATP. Zn(2+)-binding residues include C280 and C283. 310–312 (PLL) serves as a coordination point for ATP.

Belongs to the arsA ATPase family. Homodimer. Component of the Golgi to ER traffic (GET) complex, which is composed of GET1, GET2 and GET3. Within the complex, GET1 and GET2 form a heterotetramer which is stabilized by phosphatidylinositol binding and which binds to the GET3 homodimer. Interacts with the chloride channel protein GEF1.

It is found in the cytoplasm. Its subcellular location is the endoplasmic reticulum. The protein resides in the golgi apparatus. ATPase required for the post-translational delivery of tail-anchored (TA) proteins to the endoplasmic reticulum. Recognizes and selectively binds the transmembrane domain of TA proteins in the cytosol. This complex then targets to the endoplasmic reticulum by membrane-bound receptors GET1 and GET2, where the tail-anchored protein is released for insertion. This process is regulated by ATP binding and hydrolysis. ATP binding drives the homodimer towards the closed dimer state, facilitating recognition of newly synthesized TA membrane proteins. ATP hydrolysis is required for insertion. Subsequently, the homodimer reverts towards the open dimer state, lowering its affinity for the GET1-GET2 receptor, and returning it to the cytosol to initiate a new round of targeting. Cooperates with the HDEL receptor ERD2 to mediate the ATP-dependent retrieval of resident ER proteins that contain a C-terminal H-D-E-L retention signal from the Golgi to the ER. Involved in low-level resistance to the oxyanions arsenite and arsenate, and in heat tolerance. The polypeptide is ATPase GET3 (Debaryomyces hansenii (strain ATCC 36239 / CBS 767 / BCRC 21394 / JCM 1990 / NBRC 0083 / IGC 2968) (Yeast)).